The primary structure comprises 433 residues: Indole diterpene prenyltransferase terF (433 aa).

The protein belongs to the tryptophan dimethylallyltransferase family.

Its pathway is secondary metabolite biosynthesis. Functionally, indole diterpene prenyltransferase; part of the gene cluster that mediates the biosynthesis of terpendoles, indole-diterpene (IDT) mycotoxins including terpendole I, terpendole K, terpendole C, as well as the kinesin Eg5 inhibitor terpendole E. Terpendoles biosynthesis begins with the synthesis of geranylgeranyl diphosphate (GGPP) by a yet unidentified GGPP synthase. Condensation of indole-3-glycerol phosphate with GGPP by the prenyltransferase terC then forms 3-geranylgeranylindole (3-GGI), followed by epoxidation and cyclization of this intermediate (by the FAD-dependent monooxygeanse terM and the terpene cyclase terB) to form paspaline. The cytochrome monooxygenase terQ then hydroxylates paspalline at C-11 to yield terpendole E. The cytochrome monooxygenase terP converts terpendole E to 13-desoxyterpendole I, and terQ converts 13-desoxyterpendole I into terpendole I. TerF and terK are required for conversion of terpendole I to terpendole C which is further converted to terpendole K. This chain is Indole diterpene prenyltransferase terF, found in Tolypocladium album (Soil fungus).